A 407-amino-acid chain; its full sequence is Protein ORF45 (407 aa).

The span at 1-10 (MAMFVRTSSS) shows a compositional bias: polar residues. 3 disordered regions span residues 1 to 183 (MAMF…SDDE), 196 to 318 (GTGA…QRQP), and 332 to 407 (SSGS…PWLD). The residue at position 41 (Ser-41) is a Phosphoserine; by host TBK1 and IKKE. The span at 91–115 (SEYDEDEEDEDEEENDDVQEEDEPE) shows a compositional bias: acidic residues. Over residues 128 to 139 (LRPRPLARRAHT) the composition is skewed to basic residues. Position 162 is a phosphoserine; by host TBK1 and IKKE (Ser-162). The segment covering 205–218 (ASRNSVPGTQSSPY) has biased composition (polar residues). The Nuclear export signal motif lies at 284–294 (VLSQRIGLMDV). Positions 297 to 300 (KRKR) match the Nuclear localization signal motif. Low complexity-rich tracts occupy residues 342–353 (SSAVSVIVSPSS) and 360–383 (TQSP…SRCS).

Interacts with host IRF7. Interacts with host RPS6KA1. Interacts with host RAB11FIP5; this interaction results in the lysosomal degradation of ORF45 and the inhibition of viral particle release. Interacts with host p53/TP53; this interaction down-regulates p53/TP53 signaling pathway. Interacts with the N-terminal part of host NLRP1; relieving autoinhibition of the NLRP1 inflammasome. Phosphorylated on Ser-41 and Ser-162 by host IKBKE and TBK1.

The protein resides in the virion tegument. It is found in the host cytoplasm. The protein localises to the host nucleus. It localises to the host Golgi apparatus. Its function is as follows. Prevents the establishment of cellular antiviral state by blocking virus-induced phosphorylation and activation of host interferon regulatory factor 7/IRF7, a transcription factor critical for the induction of interferons alpha and beta. Mechanistically, ORF45 competes with the associated IRF7 and inhibits its phosphorylation by IKBKE or TBK1 by acting as an alternative substrate. Acts as an activator of the NLRP1 inflammasome via interaction with the N-terminal part of host NLRP1: interaction promotes translocation of the N-terminal part of NLRP1 into the nucleus, relieving autoinhibition of the NLRP1 inflammasome and leading to its activation. Also plays a role in promoting the late transcription and translation of viral lytic genes by constitutively activating host extracellular signal-regulated kinase (ERK)-p90 ribosomal S6 kinase/RPS6KA1. In addition, supports the viral replication cycle by modulating host p53/TP53 signaling pathway. Interacts with host p53/TP53 and prevents its interaction with the deubiquitinase USP7, leading to sequestration of P53/TP53 in the host cytoplasm thereby diminishing its transcriptional activity. This is Protein ORF45 (ORF45) from Homo sapiens (Human).